The chain runs to 194 residues: PRELI domain containing protein 3B (194 aa).

The PRELI/MSF1 domain maps to 1–172 (MKIWTSEHVF…VIHKLNAEIE (172 aa)). Phosphoserine is present on residues serine 46 and serine 51.

Belongs to the slowmo family.

The protein is PRELI domain containing protein 3B (PRELID3B) of Macaca fascicularis (Crab-eating macaque).